The primary structure comprises 618 residues: uncharacterized protein (618 aa).

Positions 18-47 (SCQRCRQRKIKCDRLHPCFQCVKSNSQCFY) form a DNA-binding region, zn(2)-C6 fungal-type. Ser-598 is modified (phosphoserine).

Its subcellular location is the nucleus. This is an uncharacterized protein from Schizosaccharomyces pombe (strain 972 / ATCC 24843) (Fission yeast).